The primary structure comprises 78 residues: Large ribosomal subunit protein bL28 (78 aa).

It belongs to the bacterial ribosomal protein bL28 family.

The polypeptide is Large ribosomal subunit protein bL28 (Clavibacter michiganensis subsp. michiganensis (strain NCPPB 382)).